Reading from the N-terminus, the 86-residue chain is Cyclin-dependent kinase inhibitor 6 (86 aa).

A compositionally biased stretch (low complexity) spans 1-15 (MAAAAATVTAVQPAA). Residues 1 to 23 (MAAAAATVTAVQPAASSCGKRDG) are disordered.

This sequence belongs to the CDI family. ICK/KRP subfamily.

The polypeptide is Cyclin-dependent kinase inhibitor 6 (KRP6) (Oryza sativa subsp. japonica (Rice)).